Reading from the N-terminus, the 611-residue chain is Chaperone protein DnaK (611 aa).

At Thr173 the chain carries Phosphothreonine; by autocatalysis. Positions 577-591 are enriched in low complexity; it reads AAAAQAAQGGEADAG. The interval 577 to 611 is disordered; it reads AAAAQAAQGGEADAGAGKKDDGVVDADFEEVKDDK. Over residues 599–611 the composition is skewed to acidic residues; the sequence is VVDADFEEVKDDK.

It belongs to the heat shock protein 70 family.

In terms of biological role, acts as a chaperone. The protein is Chaperone protein DnaK of Lysinibacillus sphaericus (strain C3-41).